A 145-amino-acid chain; its full sequence is D-aminoacyl-tRNA deacylase (145 aa).

A Gly-cisPro motif, important for rejection of L-amino acids motif is present at residues 137 to 138; sequence GP.

It belongs to the DTD family. As to quaternary structure, homodimer.

The protein resides in the cytoplasm. It catalyses the reaction glycyl-tRNA(Ala) + H2O = tRNA(Ala) + glycine + H(+). The catalysed reaction is a D-aminoacyl-tRNA + H2O = a tRNA + a D-alpha-amino acid + H(+). Its function is as follows. An aminoacyl-tRNA editing enzyme that deacylates mischarged D-aminoacyl-tRNAs. Also deacylates mischarged glycyl-tRNA(Ala), protecting cells against glycine mischarging by AlaRS. Acts via tRNA-based rather than protein-based catalysis; rejects L-amino acids rather than detecting D-amino acids in the active site. By recycling D-aminoacyl-tRNA to D-amino acids and free tRNA molecules, this enzyme counteracts the toxicity associated with the formation of D-aminoacyl-tRNA entities in vivo and helps enforce protein L-homochirality. The chain is D-aminoacyl-tRNA deacylase from Cereibacter sphaeroides (strain KD131 / KCTC 12085) (Rhodobacter sphaeroides).